Reading from the N-terminus, the 959-residue chain is rDNA transcriptional regulator pol5 (959 aa).

A phosphoserine mark is found at S742 and S743. A disordered region spans residues 936-959; it reads HQQTSTAASSPQKTGHHENEKTNH. A compositionally biased stretch (polar residues) spans 937–948; that stretch reads QQTSTAASSPQK. Residues 950–959 are compositionally biased toward basic and acidic residues; that stretch reads GHHENEKTNH.

It belongs to the MYBBP1A family. In terms of assembly, interacts with cdc10.

The protein localises to the nucleus. Its function is as follows. Plays an important role in the regulation of rRNA transcription. Binds to rDNA promoter fragments. The sequence is that of rDNA transcriptional regulator pol5 (pol5) from Schizosaccharomyces pombe (strain 972 / ATCC 24843) (Fission yeast).